A 161-amino-acid polypeptide reads, in one-letter code: E3 ubiquitin ligase complex SCF subunit sconC (161 aa).

An interaction with the F-box domain of F-box proteins region spans residues 103–161 (ILAANYLDIKGLLDVGCKTVANMIKGKSPEEIRKTFNIQNDFTPEEEDQIRRENEWAEE).

It belongs to the SKP1 family. In terms of assembly, component of the SCF (SKP1-CUL1-F-box protein) E3 ubiquitin ligase complexes.

The protein operates within protein modification; protein ubiquitination. In terms of biological role, essential component of the SCF (SKP1-CUL1-F-box protein) E3 ubiquitin ligase complexes, which mediate the ubiquitination and subsequent proteasomal degradation of target proteins. Controls sulfur metabolite repression, probably by mediating the inactivation or degradation of the metR transcription factor. This Aspergillus terreus (strain NIH 2624 / FGSC A1156) protein is E3 ubiquitin ligase complex SCF subunit sconC (sconC).